A 363-amino-acid polypeptide reads, in one-letter code: Cytoplasmic tRNA 2-thiolation protein 1 (363 aa).

Residues 337–363 (DGDCEQQATRSERNRSSLQGKHGNFDF) form a disordered region.

Belongs to the TtcA family. CTU1/NCS6/ATPBD3 subfamily.

The protein localises to the cytoplasm. The protein operates within tRNA modification; 5-methoxycarbonylmethyl-2-thiouridine-tRNA biosynthesis. Functionally, plays a central role in 2-thiolation of mcm(5)S(2)U at tRNA wobble positions of tRNA(Lys), tRNA(Glu) and tRNA(Gln). Directly binds tRNAs and probably acts by catalyzing adenylation of tRNAs, an intermediate required for 2-thiolation. It is unclear whether it acts as a sulfurtransferase that transfers sulfur from thiocarboxylated URM1 onto the uridine of tRNAs at wobble position. The chain is Cytoplasmic tRNA 2-thiolation protein 1 from Oryza sativa subsp. japonica (Rice).